Reading from the N-terminus, the 252-residue chain is Petrobactin import ATP-binding protein YclP (252 aa).

The region spanning 2–236 is the ABC transporter domain; that stretch reads VEVRNVSKQY…SVLEEIYDMT (235 aa). An ATP-binding site is contributed by 34–41; that stretch reads GPNGAGKS.

The protein belongs to the ABC transporter superfamily. The complex is composed of two ATP-binding proteins (YclP), two transmembrane proteins (YclN and YclO) and a solute-binding protein (YclQ).

It is found in the cell membrane. It carries out the reaction a Fe(III)-siderophore(out) + ATP + H2O = a Fe(III)-siderophore(in) + ADP + phosphate + H(+). Its function is as follows. Part of the ABC transporter complex YclNOPQ involved in uptake of ferric-petrobactin. Petrobactin is a photoreactive 3,4-catecholate siderophore produced by many members of the B.cereus group, including B.anthracis. Probably responsible for energy coupling to the transport system. The chain is Petrobactin import ATP-binding protein YclP (yclP) from Bacillus subtilis (strain 168).